Here is a 386-residue protein sequence, read N- to C-terminus: uncharacterized protein (386 aa).

The next 12 membrane-spanning stretches (helical) occupy residues 8–28 (VFVIWITTFTTMLGVGFIAPI), 43–63 (IGLIFGSFALARTVAQIPVGV), 79–99 (FFYGVSTLMYNFVSTVLGFLI), 102–122 (IFTGIFSAFVTPVAGSYIAAI), 134–154 (IFNSAITLGFGIGPFIGGILA), 156–176 (MYGIKMPFYFCGFLGILAAII), 216–236 (FIINVSNVMINAGIYAYLALY), 241–261 (NITISQVGFMIALTNILMALL), 272–292 (LGNIMIIIGIFIISFGMYLLS), 297–317 (FLTILASLTIIAVGSSISSTA), 342–362 (INIGMFIGAVSFGFLADILGI), and 365–385 (MYKFSAIFSIVVGIISYLRIE).

This sequence belongs to the major facilitator superfamily.

The protein localises to the cell membrane. This is an uncharacterized protein from Methanocaldococcus jannaschii (strain ATCC 43067 / DSM 2661 / JAL-1 / JCM 10045 / NBRC 100440) (Methanococcus jannaschii).